The chain runs to 258 residues: MLNLTGKNALVTGIANNRSIAWGIAQQLHAAGANLGITYLPDERGKFEKKVSELVEPLNPSLFLPCNVQNDEQIQSTFDTIRDKWGRLDILIHCLAFANRDDLTGDFSQTSRAGFATALDISTFSLVQLSGAAKPLMTEGGSIITLSYLGGVRAVPNYNVMGVAKAGLEASVRYLASELGSQNIRVNAISAGPIRTLASSAVGGILDMIHHVEQVAPLRRTVTQLEVGNTAAFLASDLASGITGQVLYVDAGYEIMGM.

NAD(+)-binding positions include glycine 13, serine 19–isoleucine 20, asparagine 67–valine 68, and leucine 95. Alanine 98 is a substrate binding site. Residues tyrosine 148 and tyrosine 158 each act as proton acceptor in the active site. Residues lysine 165 and isoleucine 194 to alanine 198 each bind NAD(+).

It belongs to the short-chain dehydrogenases/reductases (SDR) family. FabI subfamily. As to quaternary structure, homotetramer.

The catalysed reaction is a 2,3-saturated acyl-[ACP] + NAD(+) = a (2E)-enoyl-[ACP] + NADH + H(+). It functions in the pathway lipid metabolism; fatty acid biosynthesis. Functionally, catalyzes the reduction of a carbon-carbon double bond in an enoyl moiety that is covalently linked to an acyl carrier protein (ACP). Involved in the elongation cycle of fatty acid which are used in the lipid metabolism. The chain is Enoyl-[acyl-carrier-protein] reductase [NADH] FabI (fabI) from Nostoc sp. (strain PCC 7120 / SAG 25.82 / UTEX 2576).